The chain runs to 279 residues: Phosphate import ATP-binding protein PstB 2 (279 aa).

Residues 34 to 274 (FDIENLDLYY…PSDDRTRGYV (241 aa)) form the ABC transporter domain. 66–73 (GPSGCGKS) contacts ATP.

It belongs to the ABC transporter superfamily. Phosphate importer (TC 3.A.1.7) family. In terms of assembly, the complex is composed of two ATP-binding proteins (PstB), two transmembrane proteins (PstC and PstA) and a solute-binding protein (PstS).

It localises to the cell inner membrane. It catalyses the reaction phosphate(out) + ATP + H2O = ADP + 2 phosphate(in) + H(+). Functionally, part of the ABC transporter complex PstSACB involved in phosphate import. Responsible for energy coupling to the transport system. This Vibrio vulnificus (strain YJ016) protein is Phosphate import ATP-binding protein PstB 2.